A 354-amino-acid chain; its full sequence is Glutamine synthetase (354 aa).

The GS beta-grasp domain maps to 22–101 (IQAEYVWIDG…VLAETYNNDG (80 aa)). The region spanning 108-354 (HRHHAKKVFD…IIAETTILDK (247 aa)) is the GS catalytic domain.

The protein belongs to the glutamine synthetase family. As to quaternary structure, homooctamer.

It is found in the cytoplasm. It catalyses the reaction L-glutamate + NH4(+) + ATP = L-glutamine + ADP + phosphate + H(+). In Agaricus bisporus (White button mushroom), this protein is Glutamine synthetase (glnA).